A 360-amino-acid chain; its full sequence is Xanthohumol 4-O-methyltransferase (360 aa).

Residue D227 coordinates S-adenosyl-L-methionine. The Proton acceptor role is filled by H266.

This sequence belongs to the class I-like SAM-binding methyltransferase superfamily. Cation-independent O-methyltransferase family. Homodimer. Highly expressed in lupulin glands. Detected in cones, male flowers and roots.

Its subcellular location is the cytoplasm. It carries out the reaction xanthohumol + S-adenosyl-L-methionine = 4-O-methylxanthohumol + S-adenosyl-L-homocysteine + H(+). It catalyses the reaction desmethylxanthohumol + S-adenosyl-L-methionine = xanthohumol + S-adenosyl-L-homocysteine + H(+). The enzyme catalyses isoliquiritigenin + S-adenosyl-L-methionine = 2'-O-methylisoliquiritigenin + S-adenosyl-L-homocysteine + H(+). The catalysed reaction is trans-resveratrol + S-adenosyl-L-methionine = 3-methoxy-4',5-dihydroxy-trans-stilbene + S-adenosyl-L-homocysteine + H(+). The protein operates within secondary metabolite biosynthesis. Inhibited by S-adenosyl homocysteine. In terms of biological role, involved in the biosynthesis of prenylated phenolics natural products which contribute to the bitter taste of beer and display broad biological activities. O-methyltransferase with a low substrate selectivity. Methylates chalconaringenin, desmethylxanthohumol, xanthohumol, isoliquiritigenin, butein, 2',4-dihydroxychalcone, resveratrol, genistein and guaiacol. Catalyzes the biosynthesis of 2',4'-dihydroxy-4,6'-dimethoxy-3'-prenylchalcone (4-O-methylxanthohumol). The chain is Xanthohumol 4-O-methyltransferase from Humulus lupulus (European hop).